The primary structure comprises 438 residues: GTPase Der (438 aa).

EngA-type G domains follow at residues 3-168 and 179-354; these read PLIA…PCPE and IKLA…INRR. GTP-binding positions include 9–16, 56–60, 120–123, 185–192, 232–236, and 297–300; these read GRPNVGKS, DTGGY, NKVD, DTAGL, and NKWD. The KH-like domain occupies 355–438; it reads QKISTSNLNR…LPITMRFLRK (84 aa).

This sequence belongs to the TRAFAC class TrmE-Era-EngA-EngB-Septin-like GTPase superfamily. EngA (Der) GTPase family. As to quaternary structure, associates with the 50S ribosomal subunit.

Its function is as follows. GTPase that plays an essential role in the late steps of ribosome biogenesis. The polypeptide is GTPase Der (Chlorobaculum parvum (strain DSM 263 / NCIMB 8327) (Chlorobium vibrioforme subsp. thiosulfatophilum)).